A 144-amino-acid polypeptide reads, in one-letter code: Small ribosomal subunit protein eS17 (144 aa).

The protein belongs to the eukaryotic ribosomal protein eS17 family.

This chain is Small ribosomal subunit protein eS17 (RPS17), found in Solanum lycopersicum (Tomato).